Here is a 180-residue protein sequence, read N- to C-terminus: tRNA (cytidine(56)-2'-O)-methyltransferase (180 aa).

Leu85 contacts S-adenosyl-L-methionine.

This sequence belongs to the aTrm56 family. As to quaternary structure, homodimer.

The protein resides in the cytoplasm. It carries out the reaction cytidine(56) in tRNA + S-adenosyl-L-methionine = 2'-O-methylcytidine(56) in tRNA + S-adenosyl-L-homocysteine + H(+). In terms of biological role, specifically catalyzes the AdoMet-dependent 2'-O-ribose methylation of cytidine at position 56 in tRNAs. This is tRNA (cytidine(56)-2'-O)-methyltransferase from Methanobrevibacter smithii (strain ATCC 35061 / DSM 861 / OCM 144 / PS).